The sequence spans 129 residues: UPF0344 protein SSP1805 (129 aa).

Transmembrane regions (helical) follow at residues 1–21 (MLHM…AAYF), 36–56 (IHML…WVWI), 68–88 (MLLT…EVTI), and 100–120 (LMWT…ILPM).

This sequence belongs to the UPF0344 family.

It localises to the cell membrane. In Staphylococcus saprophyticus subsp. saprophyticus (strain ATCC 15305 / DSM 20229 / NCIMB 8711 / NCTC 7292 / S-41), this protein is UPF0344 protein SSP1805.